A 574-amino-acid chain; its full sequence is Septation ring formation regulator EzrA (574 aa).

The Extracellular portion of the chain corresponds to 1-7 (MSSGIVL). The helical transmembrane segment at 8–26 (LIVAIVLVVIIAYLIAIII) threads the bilayer. The Cytoplasmic segment spans residues 27 to 574 (RKRNDSLITK…YEKTRETIRF (548 aa)). 3 coiled-coil regions span residues 102-141 (NFIRAHSQINNIESQLNLAEEDIKAIREALAVLKEQEEKN), 255-368 (KNIE…KDVL), and 409-495 (LKNI…EETA).

Belongs to the EzrA family.

Its subcellular location is the cell membrane. In terms of biological role, negative regulator of FtsZ ring formation; modulates the frequency and position of FtsZ ring formation. Inhibits FtsZ ring formation at polar sites. Interacts either with FtsZ or with one of its binding partners to promote depolymerization. The chain is Septation ring formation regulator EzrA from Streptococcus mutans serotype c (strain ATCC 700610 / UA159).